Consider the following 761-residue polypeptide: Proline-rich extensin-like protein EPR1 (761 aa).

The N-terminal stretch at 1-24 is a signal peptide; the sequence is MRVPLIDFLRFLVLILSLSGASVA. The 1; degenerate repeat unit spans residues 63–77; it reads YSPPIYPPPIQKPPT. Positions 63 to 735 are 40 X 17 AA approximate tandem repeats of Y-S-P-P-[IV]-[KY]-P-P-P-x(1,2)-K-P-P-T-P-T; the sequence is YSPPIYPPPI…PPVQVPPTPT (673 aa). 39 tandem repeats follow at residues 78–94, 95–111, 112–128, 129–145, 146–162, 163–179, 180–195, 196–212, 213–229, 230–246, 247–263, 264–280, 281–297, 298–314, 315–331, 332–347, 348–364, 365–381, 382–398, 399–415, 416–431, 432–448, 449–465, 466–481, 482–498, 499–515, 516–531, 532–548, 549–565, 566–582, 583–599, 600–616, 617–633, 634–650, 651–667, 668–684, 685–701, 702–718, and 719–735. The segment covering 111 to 750 has biased composition (pro residues); it reads TYSPPIYPPP…QGGYGTPPPY (640 aa). Positions 111 to 761 are disordered; that stretch reads TYSPPIYPPP…YLSHPIDIRN (651 aa).

This sequence belongs to the extensin family. As to expression, specifically expressed in endosperm during seed germination, at the site of radicle protrusion.

It localises to the secreted. The protein localises to the primary cell wall. May have a specific role in modifying the cell-wall structure, specifically during seed germination, thus facilitating radicle protrusion. The sequence is that of Proline-rich extensin-like protein EPR1 (EPR1) from Arabidopsis thaliana (Mouse-ear cress).